The sequence spans 461 residues: GTPase Era, mitochondrial (461 aa).

The N-terminal 35 residues, 1–35 (MAAPWLQRWRGAYAGPSGPLRLVRLHGVQRSSWRA), are a transit peptide targeting the mitochondrion. The segment at 39–73 (AAGAFGAGPHPGPPQRAANPGPGPHPPPVATSREK) is disordered. The 266-residue stretch at 89–354 (KVLRISIIGA…QYLLMQAKPG (266 aa)) folds into the Era-type G domain. Residues 97–104 (GAPNSGKS) are G1. 97–104 (GAPNSGKS) serves as a coordination point for GTP. Positions 123–127 (HTTRC) are G2. A G3 region spans residues 144 to 147 (DTPG). Residues 144–148 (DTPGL) and 213–216 (NKVD) each bind GTP. The G4 stretch occupies residues 213-216 (NKVD). The interval 260 to 319 (KVTQTPPPENRARESPCQLETDKAQEGSSLDNSSDVKASESSLDTEAREQKPYKYGDQKN) is disordered. Residues 269-284 (NRARESPCQLETDKAQ) are compositionally biased toward basic and acidic residues. Positions 285–303 (EGSSLDNSSDVKASESSLD) are enriched in polar residues. Residues 304–319 (TEAREQKPYKYGDQKN) show a composition bias toward basic and acidic residues. The segment at 332 to 334 (LAA) is G5. Residues 380–461 (ILEYLPLEVP…RLKLKVEVKS (82 aa)) form the KH type-2 domain.

Belongs to the TRAFAC class TrmE-Era-EngA-EngB-Septin-like GTPase superfamily. Era GTPase family.

It is found in the mitochondrion matrix. Its subcellular location is the mitochondrion inner membrane. Functionally, probable GTPase that plays a role in the mitochondrial ribosomal small subunit assembly. Specifically binds the 12S mitochondrial rRNA (12S mt-rRNA) to a 33 nucleotide section delineating the 3' terminal stem-loop region. May act as a chaperone that protects the 12S mt-rRNA on the 28S mitoribosomal subunit during ribosomal small subunit assembly. This chain is GTPase Era, mitochondrial (ERAL1), found in Gallus gallus (Chicken).